A 438-amino-acid chain; its full sequence is DNA primase DnaG (438 aa).

Residues 169-243 (DSIIVVEGRA…DIDYVARAPY (75 aa)) form the Toprim domain. The Mg(2+) site is built by Glu175, Asp217, and Asp219.

Belongs to the archaeal DnaG primase family. Forms a ternary complex with MCM helicase and DNA. Mg(2+) is required as a cofactor.

The enzyme catalyses ssDNA + n NTP = ssDNA/pppN(pN)n-1 hybrid + (n-1) diphosphate.. RNA polymerase that catalyzes the synthesis of short RNA molecules used as primers for DNA polymerase during DNA replication. In Methanococcus maripaludis (strain C5 / ATCC BAA-1333), this protein is DNA primase DnaG.